We begin with the raw amino-acid sequence, 220 residues long: MSSLVSNEVYDVESGLRKVIESAKANFCESVDVAINLNINSSKSDEQVRGCVVLPKGLGREVRVAVFAKGGHLEMAREAMANIVGDEELIEEVKKKQCKLDVDWCLTTPDFMASVSSIAKILGPKGLMPNPKFNTVTFELAKAIKIIKSGQIRFKSDKTGIVHAKIGNVKFSIEDLLENFNAVINAVKQCKPASIKGLYFKDVFVISTMGKSVKVENLNN.

Belongs to the universal ribosomal protein uL1 family. As to quaternary structure, part of the 50S ribosomal subunit.

Functionally, binds directly to 23S rRNA. The L1 stalk is quite mobile in the ribosome, and is involved in E site tRNA release. Protein L1 is also a translational repressor protein, it controls the translation of the L11 operon by binding to its mRNA. The polypeptide is Large ribosomal subunit protein uL1 (Ehrlichia canis (strain Jake)).